An 86-amino-acid polypeptide reads, in one-letter code: Small ribosomal subunit protein uS17 (86 aa).

Belongs to the universal ribosomal protein uS17 family. Part of the 30S ribosomal subunit.

Its function is as follows. One of the primary rRNA binding proteins, it binds specifically to the 5'-end of 16S ribosomal RNA. The chain is Small ribosomal subunit protein uS17 from Bifidobacterium adolescentis (strain ATCC 15703 / DSM 20083 / NCTC 11814 / E194a).